The chain runs to 397 residues: Tryptophan synthase beta chain (397 aa).

N6-(pyridoxal phosphate)lysine is present on lysine 89.

The protein belongs to the TrpB family. As to quaternary structure, tetramer of two alpha and two beta chains. The cofactor is pyridoxal 5'-phosphate.

It carries out the reaction (1S,2R)-1-C-(indol-3-yl)glycerol 3-phosphate + L-serine = D-glyceraldehyde 3-phosphate + L-tryptophan + H2O. It functions in the pathway amino-acid biosynthesis; L-tryptophan biosynthesis; L-tryptophan from chorismate: step 5/5. Functionally, the beta subunit is responsible for the synthesis of L-tryptophan from indole and L-serine. In Leptospira interrogans serogroup Icterohaemorrhagiae serovar copenhageni (strain Fiocruz L1-130), this protein is Tryptophan synthase beta chain.